The chain runs to 164 residues: Thiol peroxidase (164 aa).

In terms of domain architecture, Thioredoxin spans 16–162 (LQVGDIAKDF…YEAAINAAKI (147 aa)). The active-site Cysteine sulfenic acid (-SOH) intermediate is cysteine 58. Cysteine 58 and cysteine 92 form a disulfide bridge.

It belongs to the peroxiredoxin family. Tpx subfamily. In terms of assembly, homodimer.

The enzyme catalyses a hydroperoxide + [thioredoxin]-dithiol = an alcohol + [thioredoxin]-disulfide + H2O. Thiol-specific peroxidase that catalyzes the reduction of hydrogen peroxide and organic hydroperoxides to water and alcohols, respectively. Plays a role in cell protection against oxidative stress by detoxifying peroxides. This Streptococcus agalactiae serotype V (strain ATCC BAA-611 / 2603 V/R) protein is Thiol peroxidase.